Here is a 28-residue protein sequence, read N- to C-terminus: Humanin-like 2 (28 aa).

The protein belongs to the humanin family. Highly expressed in testis. Also expressed in kidney, heart, skeletal muscles and brain.

It is found in the secreted. It localises to the cytoplasm. Functionally, plays a role as a neuroprotective and antiapoptotic factor. The protein is Humanin-like 2 of Homo sapiens (Human).